A 380-amino-acid polypeptide reads, in one-letter code: Fibromodulin (380 aa).

The N-terminal stretch at 1-18 (MRWANILLVAGLCRASLG) is a signal peptide. In terms of domain architecture, LRRNT spans 71–109 (EAQQASSWQCPQECDCPPNFSSAMYCDTRNLRYLPFVPT). The N-linked (GlcNAc...) asparagine glycan is linked to Asn-89. LRR repeat units follow at residues 110–131 (RMKYVYFQNNQITAIQEGAFDN), 134–147 (ELEWLALHNNQISS), 160–180 (NLERLYMNNNNLTKMPSPLPR), 181–202 (SLRELHLSYNQISKVPSNALEG), 205–227 (NLTALYLSHNYIFEMGASLKGLK), 228–248 (SLILADLSYNHLRKVPDGLPM), 249–270 (ALEQLYLEYNYINAIPDDYFKV), and 273–293 (KLLYVRMSHNSLTNQGLSTNT). N-linked (GlcNAc...) (keratan sulfate) asparagine glycosylation occurs at Asn-131. Asn-170 is a glycosylation site (N-linked (GlcNAc...) (keratan sulfate) asparagine). N-linked (GlcNAc...) (keratan sulfate) asparagine glycosylation occurs at Asn-205. The N-linked (GlcNAc...) (keratan sulfate) asparagine glycan is linked to Asn-295. 2 LRR repeats span residues 298-317 (SILELDLSYNRLQKIPRVST) and 318-339 (NLENLYLQGNQINEFSISSFCT). Cys-338 and Cys-371 are disulfide-bonded. Asn-345 carries an N-linked (GlcNAc...) asparagine glycan. Residues 348 to 371 (RLQVLRLDGNEIKRNAMPPDAPLC) form an LRR 11 repeat.

The protein belongs to the small leucine-rich proteoglycan (SLRP) family. SLRP class II subfamily. Binds to type I and type II collagen. In terms of processing, binds keratan sulfate chains.

The protein resides in the secreted. It localises to the extracellular space. It is found in the extracellular matrix. Functionally, affects the rate of fibrils formation. May have a primary role in collagen fibrillogenesis. The protein is Fibromodulin (FMOD) of Gallus gallus (Chicken).